The primary structure comprises 491 residues: Chromosomal replication initiator protein DnaA (491 aa).

A domain I, interacts with DnaA modulators region spans residues 1 to 69 (MTTWDKCLKK…TIQECHGNDL (69 aa)). A domain II region spans residues 69–154 (LIIEYSNKKF…KEDEEYSFGL (86 aa)). Residues 155–371 (PLKEKYVFDS…GALNRVLTTS (217 aa)) are domain III, AAA+ region. ATP contacts are provided by Gly199, Gly201, Lys202, and Thr203. The tract at residues 372–491 (KFNHKDPTIE…YELLLDKISR (120 aa)) is domain IV, binds dsDNA.

The protein belongs to the DnaA family. In terms of assembly, oligomerizes as a right-handed, spiral filament on DNA at oriC.

It localises to the cytoplasm. In terms of biological role, plays an essential role in the initiation and regulation of chromosomal replication. ATP-DnaA binds to the origin of replication (oriC) to initiate formation of the DNA replication initiation complex once per cell cycle. Binds the DnaA box (a 9 base pair repeat at the origin) and separates the double-stranded (ds)DNA. Forms a right-handed helical filament on oriC DNA; dsDNA binds to the exterior of the filament while single-stranded (ss)DNA is stabiized in the filament's interior. The ATP-DnaA-oriC complex binds and stabilizes one strand of the AT-rich DNA unwinding element (DUE), permitting loading of DNA polymerase. After initiation quickly degrades to an ADP-DnaA complex that is not apt for DNA replication. Binds acidic phospholipids. The polypeptide is Chromosomal replication initiator protein DnaA (Francisella tularensis subsp. holarctica (strain FTNF002-00 / FTA)).